The sequence spans 245 residues: 1-(5-phosphoribosyl)-5-[(5-phosphoribosylamino)methylideneamino] imidazole-4-carboxamide isomerase (245 aa).

The active-site Proton acceptor is the aspartate 7. Aspartate 129 acts as the Proton donor in catalysis.

It belongs to the HisA/HisF family.

The protein resides in the cytoplasm. The enzyme catalyses 1-(5-phospho-beta-D-ribosyl)-5-[(5-phospho-beta-D-ribosylamino)methylideneamino]imidazole-4-carboxamide = 5-[(5-phospho-1-deoxy-D-ribulos-1-ylimino)methylamino]-1-(5-phospho-beta-D-ribosyl)imidazole-4-carboxamide. It participates in amino-acid biosynthesis; L-histidine biosynthesis; L-histidine from 5-phospho-alpha-D-ribose 1-diphosphate: step 4/9. The chain is 1-(5-phosphoribosyl)-5-[(5-phosphoribosylamino)methylideneamino] imidazole-4-carboxamide isomerase from Salmonella heidelberg (strain SL476).